The primary structure comprises 231 residues: NADH-ubiquinone oxidoreductase chain 4 (231 aa).

The next 7 membrane-spanning stretches (helical) occupy residues P1–I21, M34–L54, I63–G85, A89–Y111, I128–P148, T169–L189, and L211–I231.

This sequence belongs to the complex I subunit 4 family.

It is found in the mitochondrion membrane. The catalysed reaction is a ubiquinone + NADH + 5 H(+)(in) = a ubiquinol + NAD(+) + 4 H(+)(out). Functionally, core subunit of the mitochondrial membrane respiratory chain NADH dehydrogenase (Complex I) that is believed to belong to the minimal assembly required for catalysis. Complex I functions in the transfer of electrons from NADH to the respiratory chain. The immediate electron acceptor for the enzyme is believed to be ubiquinone. The polypeptide is NADH-ubiquinone oxidoreductase chain 4 (MT-ND4) (Cerrophidion godmani (Porthidium godmani)).